Here is a 166-residue protein sequence, read N- to C-terminus: Small ribosomal subunit protein uS5 (166 aa).

The S5 DRBM domain occupies leucine 11–valine 74.

It belongs to the universal ribosomal protein uS5 family. Part of the 30S ribosomal subunit. Contacts proteins S4 and S8.

With S4 and S12 plays an important role in translational accuracy. Its function is as follows. Located at the back of the 30S subunit body where it stabilizes the conformation of the head with respect to the body. This is Small ribosomal subunit protein uS5 from Photorhabdus laumondii subsp. laumondii (strain DSM 15139 / CIP 105565 / TT01) (Photorhabdus luminescens subsp. laumondii).